Here is a 132-residue protein sequence, read N- to C-terminus: MWNEFKKFAFKGNVIDLAVGVVIGAAFGKIVSSLVKDIITPLLGMVLGGVDFTDLKITFGKSSIMYGNFIQTIFDFLIIAAAIFMFVKVFNKLTSKREEEKEEEIPEPTKEEEILGEIRDLLKQQNSSKDRA.

Transmembrane regions (helical) follow at residues 14-34 (VIDL…VSSL) and 67-87 (GNFI…FMFV).

It belongs to the MscL family. As to quaternary structure, homopentamer.

It localises to the cell membrane. Its function is as follows. Channel that opens in response to stretch forces in the membrane lipid bilayer. May participate in the regulation of osmotic pressure changes within the cell. This is Large-conductance mechanosensitive channel from Bacillus cereus (strain AH820).